A 1276-amino-acid chain; its full sequence is MTLTERLREKISQAFYNHGLLCASYPIPIILFTGLCILACCYPLLKLPLPGTGPVEFSTPVKDYSPPPVDSDHKQGEPSEQPEWYVGAPVAYIQQIFVKSSVSPWHKNLLAVDVFRLPLSRAFQLVEEIRNHVLRDSSGTKSLEEVCLQVTDLLPGLRKLRNLLPEHGCLLLSPGNFWQNDWERFHADPDIIGTIHQHEPKTLQTSATLKDLLFGVPGKYSGVSLYTRKRTVSYTITLVFQRYHAKFLSSLRARLMLLHPSPNCSLRAENLVHVHFKEEIGIAELIPLVTTYIILFAYIYFSTRKIDMVKSKWGLALAAVVTVLSSLLMSVGLCTLFGLTPTLNGGEIFPYLVVVIGLENVLVLTKSVVSTPVDLEVKLRIAQGLSSESWSIMKNVATELGIILIGYFTLVPAIQEFCLFAVVGLVSDFFLQMFFFTTVLSIDIRRMELADLNKRLPPESCLPSAKPVGRPARYERQLAVRPAMPHTITLQPSSFRNLRLPKRLRVIYFLARTRLAQRLIMAGTVVWIGILVYTDPAGLRTYLAAQVTEQSPLGEGSLGPMPVPSGVLPASRPDPAFSIFPPDAPKLPENQTVPGELPEHAAPAEGVHDSRAPEVTWGPEDEELWRRLSFRHWPTLFNYYNITLAKRYISLLPVIPVTLRLNPQEALEGRQPQDGRSAWAPPESLPAGLWEAGPKGPGGTQAHGDITLYKVAALGLAAGIVLVLLLLCLYRVLCPRNYGQPGGGAGRRRRGELPCDDYGYAPPETEIVPLVLRGHLMDIECLASDGMLLVSCCLAGQVCVWDAQTGDCLTRIPRPGSRRDSCGGGAFETQENWERLSDGGKTSPEEPGESPPLRHRPRGPPQPALFGDQPDLTCLIDTNFSVQLPPEPTQPEPRHRAGCGRARDSGYDFSRLVQRVYQEEGLAAVRMPALRPPSPGSPLPQASQEDGAAPEKGSPPLAWAPSTAGSIWSLELQGNLIVVGRSSGRLEVWDAIEGVLCCSNDEVSSGITALVFLDRRIVAARLNGSLDFFSLETHTSLSPLQFRGTPGRGSSPSSSVYSSSNTVACHLTHTVPCAHQKPITALRAAAGRLVTGSQDHTLRVFRLEDSCCLFTLQGHSGAITTVYIDQTMVLASGGQDGAICLWDVLTGSRVSHTFAHRGDVTSLTCTTSCVISSGLDDLINIWDRSTGIKLYSIQQDLGCGASLGVISDNLLVTGGQGCVSFWDLNYGDLLQTVYLGKNSEAQPARQILVLDNAAIVCNFGSELSLVYVPSVLEKLD.

Residues 1–18 (MTLTERLREKISQAFYNH) are Cytoplasmic-facing. Residues 19–39 (GLLCASYPIPIILFTGLCILA) form a helical membrane-spanning segment. Topologically, residues 40–279 (CCYPLLKLPL…NLVHVHFKEE (240 aa)) are lumenal. The tract at residues 46–284 (KLPLPGTGPV…HFKEEIGIAE (239 aa)) is loop-1. Residues 60-81 (PVKDYSPPPVDSDHKQGEPSEQ) form a disordered region. The N-linked (GlcNAc...) asparagine glycan is linked to N263. Residues 280 to 300 (IGIAELIPLVTTYIILFAYIY) form a helical membrane-spanning segment. In terms of domain architecture, SSD spans 284–442 (ELIPLVTTYI…MFFFTTVLSI (159 aa)). Over 301 to 312 (FSTRKIDMVKSK) the chain is Cytoplasmic. Residues 313 to 333 (WGLALAAVVTVLSSLLMSVGL) form a helical membrane-spanning segment. Residues 334–344 (CTLFGLTPTLN) lie on the Lumenal side of the membrane. A helical transmembrane segment spans residues 345 to 365 (GGEIFPYLVVVIGLENVLVLT). The Cytoplasmic segment spans residues 366-401 (KSVVSTPVDLEVKLRIAQGLSSESWSIMKNVATELG). A helical membrane pass occupies residues 402-422 (IILIGYFTLVPAIQEFCLFAV). A topological domain (lumenal) is located at residue V423. Residues 424 to 444 (GLVSDFFLQMFFFTTVLSIDI) traverse the membrane as a helical segment. Residues 445-518 (RRMELADLNK…FLARTRLAQR (74 aa)) lie on the Cytoplasmic side of the membrane. An ER export signal motif is present at residues 447–452 (MELADL). Residues K454 and K466 each participate in a glycyl lysine isopeptide (Lys-Gly) (interchain with G-Cter in ubiquitin) cross-link. A helical transmembrane segment spans residues 519 to 539 (LIMAGTVVWIGILVYTDPAGL). Residues 535–710 (DPAGLRTYLA…QAHGDITLYK (176 aa)) form a loop-7 region. The Lumenal portion of the chain corresponds to 540 to 708 (RTYLAAQVTE…GTQAHGDITL (169 aa)). N-linked (GlcNAc...) asparagine glycosylation is found at N590 and N641. A helical membrane pass occupies residues 709-729 (YKVAALGLAAGIVLVLLLLCL). Topologically, residues 730-1276 (YRVLCPRNYG…YVPSVLEKLD (547 aa)) are cytoplasmic. The interaction with SREBF2 stretch occupies residues 731–1276 (RVLCPRNYGQ…YVPSVLEKLD (546 aa)). Residues 771 to 811 (VLRGHLMDIECLASDGMLLVSCCLAGQVCVWDAQTGDCLTR) form a WD 1 repeat. The interval 816–903 (GSRRDSCGGG…RHRAGCGRAR (88 aa)) is disordered. Residues S821, S837, S843, S850, S905, and S934 each carry the phosphoserine modification. A disordered region spans residues 928–957 (PALRPPSPGSPLPQASQEDGAAPEKGSPPL). WD repeat units lie at residues 949–999 (APEK…LCCS) and 1002–1039 (EVSS…SLSP). The residue at position 1048 (R1048) is an Omega-N-methylarginine. WD repeat units follow at residues 1074 to 1111 (AHQK…CLFT), 1114 to 1152 (GHSG…RVSH), 1155 to 1192 (AHRG…KLYS), and 1194 to 1232 (QQDL…LLQT).

The protein belongs to the WD repeat SCAP family. Membrane region forms a homotetramer. Component of the SCAP-SREBP complex (composed of SCAP and SREBF1/SREBP1 or SREBF2/SREBP2); interacts with SREBF1/SREBP1 or SREBF2/SREBP2 through its C-terminal cytoplasmic domain. Forms a ternary complex with INSIG1 or INSIG2 through its transmembrane domains at high sterol concentrations. Interacts with PAQR3; the interaction anchors the SCAP-SREBP complex to the Golgi apparatus in low cholesterol conditions. Interacts with the SEC23-SEC24 complex in a SAR1-GTP-dependent manner through an ER export signal in its third cytoplasmic loop. Interacts with RNF139; the interaction inhibits the interaction of SCAP with SEC24B and hampering the ER to Golgi transport of the SCAP-SREBP complex. Interacts with SPRING. In terms of processing, ubiquitinated at Lys-454 and Lys-466. RNF145 triggers ubiquitination of SCAP, likely inhibiting SCAP-SREBP complex transport to the Golgi apparatus and the subsequent processing/maturation of SREBF2/SREBP2.

It is found in the endoplasmic reticulum membrane. The protein resides in the golgi apparatus membrane. It localises to the cytoplasmic vesicle. Its subcellular location is the COPII-coated vesicle membrane. Its function is as follows. Escort protein required for cholesterol as well as lipid homeostasis. Regulates export of the SCAP-SREBP complex from the endoplasmic reticulum to the Golgi upon low cholesterol, thereby regulating the processing of sterol regulatory element-binding proteins (SREBPs) SREBF1/SREBP1 and SREBF2/SREBP2. At high sterol concentrations, formation of a ternary complex with INSIG (INSIG1 or INSIG2) leads to mask the ER export signal in SCAP, promoting retention of the complex in the endoplasmic reticulum. Low sterol concentrations trigger release of INSIG, a conformational change in the SSD domain of SCAP, unmasking of the ER export signal, promoting recruitment into COPII-coated vesicles and transport of the SCAP-SREBP to the Golgi: in the Golgi, SREBPs are then processed, releasing the transcription factor fragment of SREBPs from the membrane, its import into the nucleus and up-regulation of LDLR, INSIG1 and the mevalonate pathway. Binds cholesterol via its SSD domain. This Cricetulus griseus (Chinese hamster) protein is Sterol regulatory element-binding protein cleavage-activating protein.